The following is a 336-amino-acid chain: HTH-type transcriptional regulator CdhR (336 aa).

The HTH araC/xylS-type domain maps to 213–311 (VQVIGEMERH…AASPSQDRAV (99 aa)). 2 consecutive DNA-binding regions (H-T-H motif) follow at residues 230-251 (LELAERIQVTRRQLERLFRVHL) and 278-301 (VLQVSLACGFESPSYFSRSYRARF). The tract at residues 305-336 (PSQDRAVLPLKAPAATPPGAPAGHRTPRAERG) is disordered.

In terms of biological role, induces the transcription of the PA5384-PA5388 operon in response to carnitine. This operon is involved in the degradation of L-carnitine, and allows P.aeruginosa to grow on L-carnitine as the sole source of carbon and nitrogen. This is HTH-type transcriptional regulator CdhR (cdhR) from Pseudomonas aeruginosa (strain ATCC 15692 / DSM 22644 / CIP 104116 / JCM 14847 / LMG 12228 / 1C / PRS 101 / PAO1).